Consider the following 374-residue polypeptide: Serpin B8 (374 aa).

Belongs to the serpin family. Ov-serpin subfamily.

It is found in the cytoplasm. In terms of biological role, has an important role in epithelial desmosome-mediated cell-cell adhesion. The sequence is that of Serpin B8 (SERPINB8) from Bos taurus (Bovine).